The sequence spans 372 residues: DNA replication and repair protein RecF (372 aa).

30–37 is a binding site for ATP; it reads GENGQGKT.

The protein belongs to the RecF family.

It is found in the cytoplasm. Functionally, the RecF protein is involved in DNA metabolism; it is required for DNA replication and normal SOS inducibility. RecF binds preferentially to single-stranded, linear DNA. It also seems to bind ATP. In Anaeromyxobacter dehalogenans (strain 2CP-C), this protein is DNA replication and repair protein RecF.